Here is a 65-residue protein sequence, read N- to C-terminus: Photosystem II reaction center protein J (65 aa).

The span at 1–18 (MSSKLKGPDGRLPDRLPD) shows a compositional bias: basic and acidic residues. Residues 1-21 (MSSKLKGPDGRLPDRLPDGRP) form a disordered region. The helical transmembrane segment at 36 to 56 (LWLVATAGGIAVIFVLGIFFY) threads the bilayer.

The protein belongs to the PsbJ family. In terms of assembly, PSII is composed of 1 copy each of membrane proteins PsbA, PsbB, PsbC, PsbD, PsbE, PsbF, PsbH, PsbI, PsbJ, PsbK, PsbL, PsbM, PsbT, PsbX, PsbY, Psb30/Ycf12, peripheral proteins PsbO, CyanoQ (PsbQ), PsbU, PsbV and a large number of cofactors. It forms dimeric complexes.

It localises to the cellular thylakoid membrane. In terms of biological role, one of the components of the core complex of photosystem II (PSII). PSII is a light-driven water:plastoquinone oxidoreductase that uses light energy to abstract electrons from H(2)O, generating O(2) and a proton gradient subsequently used for ATP formation. It consists of a core antenna complex that captures photons, and an electron transfer chain that converts photonic excitation into a charge separation. This is Photosystem II reaction center protein J from Prochlorococcus marinus (strain SARG / CCMP1375 / SS120).